A 778-amino-acid chain; its full sequence is Protein translocase subunit SecA 2 (778 aa).

Residues glutamine 94, 112–116 (GEGKT), and aspartate 501 contribute to the ATP site.

It belongs to the SecA family. In terms of assembly, monomer and homodimer. Part of the essential Sec protein translocation apparatus which comprises SecA, SecYEG and auxiliary proteins SecDF. Other proteins may also be involved.

It is found in the cell membrane. The protein resides in the cytoplasm. It catalyses the reaction ATP + H2O + cellular proteinSide 1 = ADP + phosphate + cellular proteinSide 2.. Part of the Sec protein translocase complex. Interacts with the SecYEG preprotein conducting channel. Has a central role in coupling the hydrolysis of ATP to the transfer of proteins into and across the cell membrane, serving as an ATP-driven molecular motor driving the stepwise translocation of polypeptide chains across the membrane. The protein is Protein translocase subunit SecA 2 of Mycobacterium leprae (strain TN).